We begin with the raw amino-acid sequence, 214 residues long: uncharacterized protein (214 aa).

The N-terminal stretch at 1–24 (MKIWIKAICITSFVIQMSACSSSA) is a signal peptide. The TNase-like domain occupies 64 to 197 (ETVKGKVLHI…KEAKAGVWSI (134 aa)). Active-site residues include R91, E99, and R142.

This is an uncharacterized protein from Bacillus anthracis.